Here is a 763-residue protein sequence, read N- to C-terminus: Phosphoglycerol transferase I (763 aa).

The next 4 helical transmembrane spans lie at 1–21 (MSEL…AWKA), 26–46 (WWFA…ITLF), 77–97 (ILPG…LGWI), and 108–128 (FGYS…SPAF).

Belongs to the OpgB family.

The protein resides in the cell inner membrane. The enzyme catalyses a phosphatidylglycerol + a membrane-derived-oligosaccharide D-glucose = a 1,2-diacyl-sn-glycerol + a membrane-derived-oligosaccharide 6-(glycerophospho)-D-glucose.. It participates in glycan metabolism; osmoregulated periplasmic glucan (OPG) biosynthesis. In terms of biological role, transfers a phosphoglycerol residue from phosphatidylglycerol to the membrane-bound nascent glucan backbones. The chain is Phosphoglycerol transferase I from Escherichia coli (strain UTI89 / UPEC).